Here is a 145-residue protein sequence, read N- to C-terminus: MAHLTLSIRGLLLALMSVLLISVAQLSMKWGMGTLNQLWSDLVMLWQGEDYSSLFSQALAPVMAVGAGLFCYALSMACWVMALKRLPLSIAYPLLSLSYVLVYLGAVYLPWLNEPLSWVKGTGIFLILLGLIFVLPKKNQTSDKS.

Topologically, residues 1-3 are cytoplasmic; sequence MAH. Residues 4 to 24 traverse the membrane as a helical segment; it reads LTLSIRGLLLALMSVLLISVA. Residues 25-61 are Periplasmic-facing; sequence QLSMKWGMGTLNQLWSDLVMLWQGEDYSSLFSQALAP. Residues 62–82 form a helical membrane-spanning segment; sequence VMAVGAGLFCYALSMACWVMA. Residues 83–89 lie on the Cytoplasmic side of the membrane; that stretch reads LKRLPLS. The helical transmembrane segment at 90-110 threads the bilayer; it reads IAYPLLSLSYVLVYLGAVYLP. The Periplasmic segment spans residues 111 to 114; that stretch reads WLNE. The chain crosses the membrane as a helical span at residues 115–135; it reads PLSWVKGTGIFLILLGLIFVL. Residues 136 to 145 are Cytoplasmic-facing; sequence PKKNQTSDKS.

This sequence belongs to the ArnF family. As to quaternary structure, heterodimer of ArnE and ArnF.

It localises to the cell inner membrane. It participates in bacterial outer membrane biogenesis; lipopolysaccharide biosynthesis. Translocates 4-amino-4-deoxy-L-arabinose-phosphoundecaprenol (alpha-L-Ara4N-phosphoundecaprenol) from the cytoplasmic to the periplasmic side of the inner membrane. The polypeptide is Probable 4-amino-4-deoxy-L-arabinose-phosphoundecaprenol flippase subunit ArnF (Shewanella sediminis (strain HAW-EB3)).